We begin with the raw amino-acid sequence, 534 residues long: CTP synthase (534 aa).

The amidoligase domain stretch occupies residues 1 to 268; that stretch reads MAAKYIFVTG…DQIVCDHLQL (268 aa). Ser-14 serves as a coordination point for CTP. Ser-14 provides a ligand contact to UTP. 15 to 20 lines the ATP pocket; sequence SLGKGI. Tyr-55 contributes to the L-glutamine binding site. ATP is bound at residue Asp-72. Asp-72 and Glu-142 together coordinate Mg(2+). Residues 149–151, 189–194, and Lys-225 contribute to the CTP site; these read DIE and KSKPTQ. Residues 189-194 and Lys-225 each bind UTP; that span reads KSKPTQ. A Glutamine amidotransferase type-1 domain is found at 293–534; it reads RIAIVGKYVE…FVRNALAAQA (242 aa). Gly-355 lines the L-glutamine pocket. Cys-382 functions as the Nucleophile; for glutamine hydrolysis in the catalytic mechanism. Residues 383 to 386, Glu-406, and Arg-463 each bind L-glutamine; that span reads LGMQ. Active-site residues include His-508 and Glu-510.

The protein belongs to the CTP synthase family. As to quaternary structure, homotetramer.

The enzyme catalyses UTP + L-glutamine + ATP + H2O = CTP + L-glutamate + ADP + phosphate + 2 H(+). It catalyses the reaction L-glutamine + H2O = L-glutamate + NH4(+). The catalysed reaction is UTP + NH4(+) + ATP = CTP + ADP + phosphate + 2 H(+). Its pathway is pyrimidine metabolism; CTP biosynthesis via de novo pathway; CTP from UDP: step 2/2. Its activity is regulated as follows. Allosterically activated by GTP, when glutamine is the substrate; GTP has no effect on the reaction when ammonia is the substrate. The allosteric effector GTP functions by stabilizing the protein conformation that binds the tetrahedral intermediate(s) formed during glutamine hydrolysis. Inhibited by the product CTP, via allosteric rather than competitive inhibition. Its function is as follows. Catalyzes the ATP-dependent amination of UTP to CTP with either L-glutamine or ammonia as the source of nitrogen. Regulates intracellular CTP levels through interactions with the four ribonucleotide triphosphates. In Shouchella clausii (strain KSM-K16) (Alkalihalobacillus clausii), this protein is CTP synthase.